The primary structure comprises 468 residues: 3-isopropylmalate dehydratase large subunit (468 aa).

The [4Fe-4S] cluster site is built by Cys-349, Cys-409, and Cys-412.

Belongs to the aconitase/IPM isomerase family. LeuC type 1 subfamily. Heterodimer of LeuC and LeuD. [4Fe-4S] cluster is required as a cofactor.

It carries out the reaction (2R,3S)-3-isopropylmalate = (2S)-2-isopropylmalate. It participates in amino-acid biosynthesis; L-leucine biosynthesis; L-leucine from 3-methyl-2-oxobutanoate: step 2/4. In terms of biological role, catalyzes the isomerization between 2-isopropylmalate and 3-isopropylmalate, via the formation of 2-isopropylmaleate. The polypeptide is 3-isopropylmalate dehydratase large subunit (Shewanella baltica (strain OS155 / ATCC BAA-1091)).